We begin with the raw amino-acid sequence, 184 residues long: Lactoylglutathione lyase (184 aa).

Ala-2 is subject to N-acetylalanine. Cys-19 and Cys-20 are oxidised to a cystine. One can recognise a VOC domain in the interval 31 to 177 (LLQQTMLRIK…DGYWIEILNP (147 aa)). 2 residues coordinate substrate: Gln-34 and Arg-38. Position 34 (Gln-34) interacts with Zn(2+). Residue Lys-88 is modified to N6-succinyllysine. Glu-100 is a Zn(2+) binding site. Asn-104 contacts substrate. Phosphothreonine is present on Thr-107. Positions 123 and 127 each coordinate substrate. His-127 serves as a coordination point for Zn(2+). Cys-139 is modified (S-glutathionyl cysteine). Lys-148 carries the post-translational modification N6-acetyllysine; alternate. Residue Lys-148 is modified to N6-succinyllysine; alternate. Position 157–158 (157–158 (KM)) interacts with substrate. Glu-173 is a Zn(2+) binding site. Glu-173 serves as the catalytic Proton donor/acceptor.

It belongs to the glyoxalase I family. As to quaternary structure, homodimer. It depends on Zn(2+) as a cofactor. In terms of processing, glutathionylation at Cys-139 inhibits enzyme activity. Phosphorylated at Thr-107 in the presence of CaMK2. However, this is a consensus site for phosphorylation by CK2 so phosphorylation may be mediated by CK2 rather than CaMK2. Phosphorylation is induced by TNF and suppresses the TNF-induced transcriptional activity of NF-kappa-B. Post-translationally, exists in a nitric oxide (NO)-modified form. The exact nature of the modification is unknown, but it suppresses the TNF-induced transcriptional activity of NF-kappa-B.

The catalysed reaction is (R)-S-lactoylglutathione = methylglyoxal + glutathione. Its pathway is secondary metabolite metabolism; methylglyoxal degradation; (R)-lactate from methylglyoxal: step 1/2. Subject to competitive inhibition by methyl-gerfelin. Its function is as follows. Catalyzes the conversion of hemimercaptal, formed from methylglyoxal and glutathione, to S-lactoylglutathione. Involved in the regulation of TNF-induced transcriptional activity of NF-kappa-B. Required for normal osteoclastogenesis. The sequence is that of Lactoylglutathione lyase (Glo1) from Mus musculus (Mouse).